The primary structure comprises 245 residues: MSDPASLFGLPPDPDAAPPVHLPGDWDEVLRGETSQPYFRELWAFVQREREAGPVYPAPEDLFSALRLTPYRDVKVLILGQDPYHGAGQAHGLSFSVRPGVRVPPSLQNIYKELRDDVGFKPPRHGSLVSWARQGVLLLNAVLTVREGEPNSHAGKGWESFTDAIIRAVNEKPTRVVFVLWGAYARKKAKLVTQPQHVIIESAHPSPLSVAKFLGTRPFSRINAALEAAGETPIDWQLPAEPEVA.

D82 acts as the Proton acceptor in catalysis.

This sequence belongs to the uracil-DNA glycosylase (UDG) superfamily. UNG family.

The protein localises to the cytoplasm. It catalyses the reaction Hydrolyzes single-stranded DNA or mismatched double-stranded DNA and polynucleotides, releasing free uracil.. Excises uracil residues from the DNA which can arise as a result of misincorporation of dUMP residues by DNA polymerase or due to deamination of cytosine. In Deinococcus geothermalis (strain DSM 11300 / CIP 105573 / AG-3a), this protein is Uracil-DNA glycosylase.